The chain runs to 453 residues: Ribosomal protein uS12 methylthiotransferase RimO (453 aa).

Residues 5-120 (PKVGFVSLGC…VMQAVHSHLP (116 aa)) enclose the MTTase N-terminal domain. [4Fe-4S] cluster is bound by residues C14, C50, C79, C151, C155, and C158. Residues 137–382 (LTPRHYAYLK…MEVAEEVSAR (246 aa)) form the Radical SAM core domain. In terms of domain architecture, TRAM spans 385–453 (QRKVGKTLKV…ADGHDLWGEV (69 aa)).

This sequence belongs to the methylthiotransferase family. RimO subfamily. It depends on [4Fe-4S] cluster as a cofactor.

The protein resides in the cytoplasm. The enzyme catalyses L-aspartate(89)-[ribosomal protein uS12]-hydrogen + (sulfur carrier)-SH + AH2 + 2 S-adenosyl-L-methionine = 3-methylsulfanyl-L-aspartate(89)-[ribosomal protein uS12]-hydrogen + (sulfur carrier)-H + 5'-deoxyadenosine + L-methionine + A + S-adenosyl-L-homocysteine + 2 H(+). Its function is as follows. Catalyzes the methylthiolation of an aspartic acid residue of ribosomal protein uS12. The sequence is that of Ribosomal protein uS12 methylthiotransferase RimO from Burkholderia vietnamiensis (strain G4 / LMG 22486) (Burkholderia cepacia (strain R1808)).